Reading from the N-terminus, the 407-residue chain is Indoleamine 2,3-dioxygenase 1 (407 aa).

Residue H350 coordinates heme b. Residues 362–407 are disordered; it reads SKKKPTDGDKSEEPSNVESRGTGGTNPMTFLRSVKDTTEKALLSWP. The span at 365–374 shows a compositional bias: basic and acidic residues; sequence KPTDGDKSEE.

This sequence belongs to the indoleamine 2,3-dioxygenase family. In terms of assembly, monomer. Requires heme b as cofactor. In terms of tissue distribution, highly expressed in epididymis, duodemum, jejunum, ileum, colon and spleen. Highly expressed in epididymis, prostate, duodemum, jejunum, ileum, colon and spleen, not detected in the liver (at protein level). Expressed in tumors only upon exposure to IFN gamma. Constitutively expressed in placenta in trophoblast cells. Expression is restricted to perinuclear regions of primary trophoblast giant cells (TGCs) of fetal origin at mid-gestation (10.5 dpc). After placentation (14 dpc), no IDO expression was detected at the maternal-fetal interface.

The protein localises to the cytoplasm. It is found in the cytosol. It carries out the reaction D-tryptophan + O2 = N-formyl-D-kynurenine. The enzyme catalyses L-tryptophan + O2 = N-formyl-L-kynurenine. With respect to regulation, activity is inhibited by and MTH-trp (methylthiohydantoin-DL-tryptophan), modestly inhibited by L-1MT (1-methyl-L-tryptophan) but not D-1MT (1-methyl-D-tryptophan). In terms of biological role, catalyzes the first and rate limiting step of the catabolism of the essential amino acid tryptophan along the kynurenine pathway. Involved in the peripheral immune tolerance, contributing to maintain homeostasis by preventing autoimmunity or immunopathology that would result from uncontrolled and overreacting immune responses. Tryptophan shortage inhibits T lymphocytes division and accumulation of tryptophan catabolites induces T-cell apoptosis and differentiation of regulatory T-cells. Acts as a suppressor of anti-tumor immunity. Limits the growth of intracellular pathogens by depriving tryptophan. Protects the fetus from maternal immune rejection. The sequence is that of Indoleamine 2,3-dioxygenase 1 from Mus musculus (Mouse).